Consider the following 449-residue polypeptide: Exodeoxyribonuclease 7 large subunit (449 aa).

Belongs to the XseA family. Heterooligomer composed of large and small subunits.

The protein resides in the cytoplasm. It catalyses the reaction Exonucleolytic cleavage in either 5'- to 3'- or 3'- to 5'-direction to yield nucleoside 5'-phosphates.. Its function is as follows. Bidirectionally degrades single-stranded DNA into large acid-insoluble oligonucleotides, which are then degraded further into small acid-soluble oligonucleotides. This is Exodeoxyribonuclease 7 large subunit from Salmonella schwarzengrund (strain CVM19633).